A 679-amino-acid polypeptide reads, in one-letter code: Enzymatic polyprotein (679 aa).

Positions 40–130 (LHCFVDTGAS…LYEPFIQFTD (91 aa)) are protease. D45 is a catalytic residue. Residues 272-452 (LKVIKPSKSP…KKINFLGLEI (181 aa)) form the Reverse transcriptase domain.

The protein belongs to the caulimoviridae enzymatic polyprotein family.

It catalyses the reaction DNA(n) + a 2'-deoxyribonucleoside 5'-triphosphate = DNA(n+1) + diphosphate. Encodes for at least two polypeptides: protease (PR) and reverse transcriptase (RT). The protease processes the polyprotein in cis. Reverse transcriptase is multifunctional enzyme that converts the viral RNA genome into dsDNA in viral cytoplasmic capsids. This enzyme displays a DNA polymerase activity that can copy either DNA or RNA templates, and a ribonuclease H (RNase H) activity that cleaves the RNA strand of RNA-DNA heteroduplexes in a partially processive 3'- to 5'-endonucleasic mode. Neo-synthesized pregenomic RNA (pgRNA) are encapsidated, and reverse-transcribed inside the nucleocapsid. Partial (+)DNA is synthesized from the (-)DNA template and generates the relaxed circular DNA (RC-DNA) genome. After budding and infection, the RC-DNA migrates in the nucleus, and is converted into a plasmid-like covalently closed circular DNA (cccDNA). The polypeptide is Enzymatic polyprotein (Cauliflower mosaic virus (strain CM-1841) (CaMV)).